We begin with the raw amino-acid sequence, 178 residues long: DELTA-miturgitoxin-Cp3a (178 aa).

Positions 1–18 are cleaved as a signal peptide; the sequence is MKALYLLGLLAFLYSCSS. The propeptide occupies 19–46; the sequence is ENVYDLQPESSEEENPGTFLEAIQEQSR. Residues 43–46 carry the Processing quadruplet motif motif; it reads EQSR. Cystine bridges form between Cys48–Cys63, Cys55–Cys72, Cys62–Cys86, Cys74–Cys84, Cys113–Cys128, Cys120–Cys137, Cys127–Cys155, and Cys139–Cys153.

It belongs to the spider toxin CSTX family. Double-CSTX subfamily. In terms of processing, cleavage of the propeptide depends on the processing quadruplet motif (XXXR, with at least one of X being E). As to expression, expressed by the venom gland.

The protein resides in the secreted. In terms of biological role, spider venom toxin that exhibits cytolytic activity by forming an alpha-helix across the membrane. Lethal to insect larvae. The polypeptide is DELTA-miturgitoxin-Cp3a (Cheiracanthium punctorium (Yellow sac spider)).